Reading from the N-terminus, the 317-residue chain is Retinol dehydrogenase 16 (317 aa).

33 to 57 (FITGCDSGFGTLLARQLDRRGMRVL) contributes to the NAD(+) binding site. Catalysis depends on Y176, which acts as the Proton acceptor. Residues 289–309 (LFYLPLSYLPTFLVDALLYWT) form a helical membrane-spanning segment.

The protein belongs to the short-chain dehydrogenases/reductases (SDR) family. In terms of assembly, homodimer. In terms of processing, not glycosylated.

The protein localises to the endoplasmic reticulum membrane. Its subcellular location is the microsome membrane. It carries out the reaction all-trans-retinol--[retinol-binding protein] + NAD(+) = all-trans-retinal--[retinol-binding protein] + NADH + H(+). It catalyses the reaction 9-cis-retinol + NAD(+) = 9-cis-retinal + NADH + H(+). The catalysed reaction is 11-cis-retinol + NAD(+) = 11-cis-retinal + NADH + H(+). The enzyme catalyses 13-cis-retinol + NAD(+) = 13-cis-retinal + NADH + H(+). It carries out the reaction androsterone + NAD(+) = 5alpha-androstan-3,17-dione + NADH + H(+). It catalyses the reaction 5alpha-androstane-3alpha,17beta-diol + NAD(+) = 17beta-hydroxy-5alpha-androstan-3-one + NADH + H(+). The protein operates within cofactor metabolism; retinol metabolism. In terms of biological role, oxidoreductase with a preference for NAD. Oxidizes all-trans-retinol, 9-cis-retinol, 11-cis-retinol and 13-cis-retinol to the corresponding aldehydes. Has higher activity towards CRBP-bound retinol than with free retinol. Oxidizes 3-alpha-hydroxysteroids. Oxidizes androstanediol and androsterone to dihydrotestosterone and androstanedione. Can also catalyze the reverse reaction. The polypeptide is Retinol dehydrogenase 16 (Mus musculus (Mouse)).